The following is an 87-amino-acid chain: Acyl-CoA-binding protein (87 aa).

Position 2 is an N-acetylserine (Ser2). The region spanning 2–87 (SQAEFDKAAE…VEELKKKYGI (86 aa)) is the ACB domain. Lys8 bears the N6-acetyllysine; alternate mark. Residue Lys8 is modified to N6-succinyllysine; alternate. Lys14 is a binding site for an acyl-CoA. At Lys17 the chain carries N6-succinyllysine. Lys19 is modified (N6-acetyllysine). Tyr29 bears the Phosphotyrosine mark. An acyl-CoA is bound by residues 29-33 (YSHYK), Lys51, Lys55, and Tyr74. Lys51 bears the N6-acetyllysine mark. Lys55 carries the post-translational modification N6-acetyllysine; alternate. Lys55 is subject to N6-succinyllysine; alternate. At Lys55 the chain carries N6-(2-hydroxyisobutyryl)lysine; alternate. N6-malonyllysine; alternate is present on Lys55. Position 77 is an N6-acetyllysine; alternate (Lys77). Lys77 is modified (N6-succinyllysine; alternate).

It belongs to the ACBP family. As to quaternary structure, monomer.

It localises to the endoplasmic reticulum. Its subcellular location is the golgi apparatus. Its function is as follows. Binds medium- and long-chain acyl-CoA esters with very high affinity and may function as an intracellular carrier of acyl-CoA esters. The protein is Acyl-CoA-binding protein (DBI) of Chaetophractus villosus (South American armadillo).